The primary structure comprises 353 residues: Photosystem II protein D1 (353 aa).

N-acetylthreonine is present on threonine 2. Phosphothreonine is present on threonine 2. 3 helical membrane-spanning segments follow: residues 29–46 (YIGWFGVLMIPTLLTATS), 118–133 (HFLLGVACYMGREWEL), and 142–156 (WIAVAYSAPVAAATA). Histidine 118 lines the chlorophyll a pocket. Tyrosine 126 lines the pheophytin a pocket. The [CaMn4O5] cluster site is built by aspartate 170 and glutamate 189. Residues 197–218 (FHMLGVAGVFGGSLFSAMHGSL) form a helical membrane-spanning segment. Histidine 198 lines the chlorophyll a pocket. Residues histidine 215 and 264-265 (SF) contribute to the a quinone site. Histidine 215 provides a ligand contact to Fe cation. Position 272 (histidine 272) interacts with Fe cation. The chain crosses the membrane as a helical span at residues 274-288 (FLAAWPVVGIWFTAL). [CaMn4O5] cluster is bound by residues histidine 332, glutamate 333, aspartate 342, and alanine 344. Residues 345-353 (AIEAPSTNG) constitute a propeptide that is removed on maturation.

It belongs to the reaction center PufL/M/PsbA/D family. PSII is composed of 1 copy each of membrane proteins PsbA, PsbB, PsbC, PsbD, PsbE, PsbF, PsbH, PsbI, PsbJ, PsbK, PsbL, PsbM, PsbT, PsbX, PsbY, PsbZ, Psb30/Ycf12, at least 3 peripheral proteins of the oxygen-evolving complex and a large number of cofactors. It forms dimeric complexes. The D1/D2 heterodimer binds P680, chlorophylls that are the primary electron donor of PSII, and subsequent electron acceptors. It shares a non-heme iron and each subunit binds pheophytin, quinone, additional chlorophylls, carotenoids and lipids. D1 provides most of the ligands for the Mn4-Ca-O5 cluster of the oxygen-evolving complex (OEC). There is also a Cl(-1) ion associated with D1 and D2, which is required for oxygen evolution. The PSII complex binds additional chlorophylls, carotenoids and specific lipids. serves as cofactor. Post-translationally, tyr-161 forms a radical intermediate that is referred to as redox-active TyrZ, YZ or Y-Z. In terms of processing, C-terminally processed by CTPA; processing is essential to allow assembly of the oxygen-evolving complex and thus photosynthetic growth.

It is found in the plastid. The protein resides in the chloroplast thylakoid membrane. The enzyme catalyses 2 a plastoquinone + 4 hnu + 2 H2O = 2 a plastoquinol + O2. In terms of biological role, photosystem II (PSII) is a light-driven water:plastoquinone oxidoreductase that uses light energy to abstract electrons from H(2)O, generating O(2) and a proton gradient subsequently used for ATP formation. It consists of a core antenna complex that captures photons, and an electron transfer chain that converts photonic excitation into a charge separation. The D1/D2 (PsbA/PsbD) reaction center heterodimer binds P680, the primary electron donor of PSII as well as several subsequent electron acceptors. This chain is Photosystem II protein D1, found in Petunia hybrida (Petunia).